The primary structure comprises 345 residues: Holliday junction branch migration complex subunit RuvB (345 aa).

The interval 1–186 (MSTDPDEREV…FGFTAHMDFY (186 aa)) is large ATPase domain (RuvB-L). Residues leucine 25, arginine 26, glycine 67, lysine 70, threonine 71, serine 72, 133 to 135 (EDF), arginine 176, tyrosine 186, and arginine 223 each bind ATP. Mg(2+) is bound at residue threonine 71. The interval 187–257 (EPAELERVLV…VAKAALAVYD (71 aa)) is small ATPAse domain (RuvB-S). Residues 260–345 (ELGLDRLDRA…AGANQPGLFE (86 aa)) form a head domain (RuvB-H) region. DNA contacts are provided by arginine 315 and arginine 320.

This sequence belongs to the RuvB family. Homohexamer. Forms an RuvA(8)-RuvB(12)-Holliday junction (HJ) complex. HJ DNA is sandwiched between 2 RuvA tetramers; dsDNA enters through RuvA and exits via RuvB. An RuvB hexamer assembles on each DNA strand where it exits the tetramer. Each RuvB hexamer is contacted by two RuvA subunits (via domain III) on 2 adjacent RuvB subunits; this complex drives branch migration. In the full resolvosome a probable DNA-RuvA(4)-RuvB(12)-RuvC(2) complex forms which resolves the HJ.

It localises to the cytoplasm. The enzyme catalyses ATP + H2O = ADP + phosphate + H(+). In terms of biological role, the RuvA-RuvB-RuvC complex processes Holliday junction (HJ) DNA during genetic recombination and DNA repair, while the RuvA-RuvB complex plays an important role in the rescue of blocked DNA replication forks via replication fork reversal (RFR). RuvA specifically binds to HJ cruciform DNA, conferring on it an open structure. The RuvB hexamer acts as an ATP-dependent pump, pulling dsDNA into and through the RuvAB complex. RuvB forms 2 homohexamers on either side of HJ DNA bound by 1 or 2 RuvA tetramers; 4 subunits per hexamer contact DNA at a time. Coordinated motions by a converter formed by DNA-disengaged RuvB subunits stimulates ATP hydrolysis and nucleotide exchange. Immobilization of the converter enables RuvB to convert the ATP-contained energy into a lever motion, pulling 2 nucleotides of DNA out of the RuvA tetramer per ATP hydrolyzed, thus driving DNA branch migration. The RuvB motors rotate together with the DNA substrate, which together with the progressing nucleotide cycle form the mechanistic basis for DNA recombination by continuous HJ branch migration. Branch migration allows RuvC to scan DNA until it finds its consensus sequence, where it cleaves and resolves cruciform DNA. The chain is Holliday junction branch migration complex subunit RuvB from Mycobacterium ulcerans (strain Agy99).